Reading from the N-terminus, the 160-residue chain is Cytochrome b6-f complex subunit 4 (160 aa).

3 consecutive transmembrane segments (helical) span residues 36-56, 95-115, and 131-151; these read LLYIFPVVILGTIACNVGLAI, LLGVLLMVSVPSGLLTVPFLE, and TVFLIGTVVALWLGIGATLPI.

Belongs to the cytochrome b family. PetD subfamily. The 4 large subunits of the cytochrome b6-f complex are cytochrome b6, subunit IV (17 kDa polypeptide, petD), cytochrome f and the Rieske protein, while the 4 small subunits are petG, petL, petM and petN. The complex functions as a dimer.

The protein localises to the plastid. It localises to the chloroplast thylakoid membrane. In terms of biological role, component of the cytochrome b6-f complex, which mediates electron transfer between photosystem II (PSII) and photosystem I (PSI), cyclic electron flow around PSI, and state transitions. The protein is Cytochrome b6-f complex subunit 4 of Oenothera elata subsp. hookeri (Hooker's evening primrose).